Consider the following 268-residue polypeptide: Eukaryotic translation initiation factor 2 subunit beta (268 aa).

The segment covering 1–12 (MADEINEIREEQ) has biased composition (basic and acidic residues). A disordered region spans residues 1 to 85 (MADEINEIRE…LNNESVDAGE (85 aa)). Residue alanine 2 is modified to N-acetylalanine. Residues serine 42, serine 80, and serine 112 each carry the phosphoserine; by CK2 modification. The C4-type zinc-finger motif lies at 222-246 (CLGCKSPDTILSKENRLFFLRCEKC).

The protein belongs to the eIF-2-beta/eIF-5 family. In terms of assembly, eukaryotic translation initiation factor 2 eIF2 is a heterotrimeric complex composed of an alpha, a beta and a gamma subunit. Phosphorylated at Ser-42, Ser-80 and Ser-112 by CK2.

The protein resides in the cytoplasm. The protein localises to the cytosol. Functionally, component of the eIF2 complex that functions in the early steps of protein synthesis by forming a ternary complex with GTP and initiator tRNA. This complex binds to a 40S ribosomal subunit, followed by mRNA binding to form a 43S pre-initiation complex (43S PIC). Junction of the 60S ribosomal subunit to form the 80S initiation complex is preceded by hydrolysis of the GTP bound to eIF2 and release of an eIF2-GDP binary complex. In order for eIF2 to recycle and catalyze another round of initiation, the GDP bound to eIF2 must exchange with GTP by way of a reaction catalyzed by eIF2B. The chain is Eukaryotic translation initiation factor 2 subunit beta from Arabidopsis thaliana (Mouse-ear cress).